The primary structure comprises 359 residues: 3-dehydroquinate synthase (359 aa).

Residues 72–77 (DGEHYK), 106–110 (GVIGD), 130–131 (TT), lysine 143, and lysine 152 each bind NAD(+). 3 residues coordinate Zn(2+): glutamate 185, histidine 248, and histidine 265.

Belongs to the sugar phosphate cyclases superfamily. Dehydroquinate synthase family. Co(2+) is required as a cofactor. Zn(2+) serves as cofactor. Requires NAD(+) as cofactor.

The protein resides in the cytoplasm. It catalyses the reaction 7-phospho-2-dehydro-3-deoxy-D-arabino-heptonate = 3-dehydroquinate + phosphate. It functions in the pathway metabolic intermediate biosynthesis; chorismate biosynthesis; chorismate from D-erythrose 4-phosphate and phosphoenolpyruvate: step 2/7. In terms of biological role, catalyzes the conversion of 3-deoxy-D-arabino-heptulosonate 7-phosphate (DAHP) to dehydroquinate (DHQ). The polypeptide is 3-dehydroquinate synthase (Thermodesulfovibrio yellowstonii (strain ATCC 51303 / DSM 11347 / YP87)).